Consider the following 98-residue polypeptide: Large ribosomal subunit protein eL21 (98 aa).

The disordered stretch occupies residues 1–22 (MVQMSEGFRRKTRKKLSKHPRE). A compositionally biased stretch (basic residues) spans 10–21 (RKTRKKLSKHPR).

The protein belongs to the eukaryotic ribosomal protein eL21 family.

The chain is Large ribosomal subunit protein eL21 (rpl21e) from Methanocaldococcus jannaschii (strain ATCC 43067 / DSM 2661 / JAL-1 / JCM 10045 / NBRC 100440) (Methanococcus jannaschii).